Consider the following 122-residue polypeptide: Large ribosomal subunit protein uL22 (122 aa).

Residues 102-122 (VAEGKEMKSSKSHKKNQAEGK) form a disordered region.

This sequence belongs to the universal ribosomal protein uL22 family. Part of the 50S ribosomal subunit.

In terms of biological role, this protein binds specifically to 23S rRNA; its binding is stimulated by other ribosomal proteins, e.g. L4, L17, and L20. It is important during the early stages of 50S assembly. It makes multiple contacts with different domains of the 23S rRNA in the assembled 50S subunit and ribosome. The globular domain of the protein is located near the polypeptide exit tunnel on the outside of the subunit, while an extended beta-hairpin is found that lines the wall of the exit tunnel in the center of the 70S ribosome. The chain is Large ribosomal subunit protein uL22 from Helicobacter pylori (strain HPAG1).